Reading from the N-terminus, the 126-residue chain is uncharacterized protein (126 aa).

Over 1–28 the chain is Cytoplasmic; it reads MAGEAVSEHTPDSQEVTVTSVVCCLDSV. A helical transmembrane segment spans residues 29 to 49; sequence VEIGHHVVYSVVTPLIVAVLI. Residues 50–75 lie on the Extracellular side of the membrane; sequence DTMAGEAVLEHTSDSQEEIVTTVVCS. Residues 76–96 traverse the membrane as a helical segment; sequence VVPLVCFVVSVVCFVISVVEI. A topological domain (cytoplasmic) is located at residue Gly97. Residues 98 to 118 traverse the membrane as a helical segment; that stretch reads HHVVYSVVAPLTVTVAVETIA. Residues 119–126 are Extracellular-facing; the sequence is EEMDSVHT.

It localises to the membrane. This is an uncharacterized protein from Saccharomyces cerevisiae (strain ATCC 204508 / S288c) (Baker's yeast).